Reading from the N-terminus, the 249-residue chain is tRNA pseudouridine synthase A (249 aa).

The Nucleophile role is filled by Asp-53. Tyr-111 serves as a coordination point for substrate.

Belongs to the tRNA pseudouridine synthase TruA family. Homodimer.

The catalysed reaction is uridine(38/39/40) in tRNA = pseudouridine(38/39/40) in tRNA. Its function is as follows. Formation of pseudouridine at positions 38, 39 and 40 in the anticodon stem and loop of transfer RNAs. The sequence is that of tRNA pseudouridine synthase A from Streptococcus equi subsp. zooepidemicus (strain MGCS10565).